The sequence spans 172 residues: Adenine phosphoribosyltransferase (172 aa).

The protein belongs to the purine/pyrimidine phosphoribosyltransferase family. Homodimer.

The protein localises to the cytoplasm. The catalysed reaction is AMP + diphosphate = 5-phospho-alpha-D-ribose 1-diphosphate + adenine. It functions in the pathway purine metabolism; AMP biosynthesis via salvage pathway; AMP from adenine: step 1/1. Catalyzes a salvage reaction resulting in the formation of AMP, that is energically less costly than de novo synthesis. This chain is Adenine phosphoribosyltransferase, found in Alkaliphilus oremlandii (strain OhILAs) (Clostridium oremlandii (strain OhILAs)).